A 258-amino-acid chain; its full sequence is PF03932 family protein CutC (258 aa).

Belongs to the CutC family.

The protein resides in the cytoplasm. The polypeptide is PF03932 family protein CutC (Mesorhizobium japonicum (strain LMG 29417 / CECT 9101 / MAFF 303099) (Mesorhizobium loti (strain MAFF 303099))).